Consider the following 285-residue polypeptide: tRNA pseudouridine synthase A (285 aa).

Asp-69 serves as the catalytic Nucleophile. Residue Tyr-127 participates in substrate binding.

It belongs to the tRNA pseudouridine synthase TruA family. As to quaternary structure, homodimer.

The enzyme catalyses uridine(38/39/40) in tRNA = pseudouridine(38/39/40) in tRNA. Formation of pseudouridine at positions 38, 39 and 40 in the anticodon stem and loop of transfer RNAs. The protein is tRNA pseudouridine synthase A of Pseudomonas aeruginosa (strain ATCC 15692 / DSM 22644 / CIP 104116 / JCM 14847 / LMG 12228 / 1C / PRS 101 / PAO1).